We begin with the raw amino-acid sequence, 37 residues long: Potassium channel toxin alpha-KTx 1.13 (37 aa).

Gln-1 is subject to Pyrrolidone carboxylic acid. 3 cysteine pairs are disulfide-bonded: Cys-7–Cys-28, Cys-13–Cys-33, and Cys-17–Cys-35. Positions 26–33 are interaction with Ca(2+)-activated K(+) channels; sequence GKCMNKKC.

This sequence belongs to the short scorpion toxin superfamily. Potassium channel inhibitor family. Alpha-KTx 01 subfamily. In terms of tissue distribution, expressed by the venom gland.

It is found in the secreted. In terms of biological role, potent selective inhibitor of high conductance (maxi-K), different medium and small conductance calcium-activated potassium channels (KCa1.1/KCNMA1 and others), as well as a voltage-dependent potassium channel (Kv1.3/KCNA3&gt;Kv1.2/KCNA2&gt;Kv1.6/KCNA3&gt;&gt;Shaker/Sh). It blocks channel activity by a simple bimolecular inhibition process. Functionally, has a pH-specific antimicrobial activity against bacteria (B.subtilis, E.coli and S.aureus) and the fungus C.albicans. The sequence is that of Potassium channel toxin alpha-KTx 1.13 from Leiurus hebraeus (Hebrew deathstalker scorpion).